A 298-amino-acid chain; its full sequence is Tyrosine recombinase XerC (298 aa).

Positions 1–85 constitute a Core-binding (CB) domain; that stretch reads MQQQLDAYCA…AVRGLYHYLN (85 aa). The Tyr recombinase domain occupies 106-285; the sequence is RLPKTLDTDR…DFQHLAAVYD (180 aa). Residues arginine 146, lysine 170, histidine 237, arginine 240, and histidine 263 contribute to the active site. Catalysis depends on tyrosine 272, which acts as the O-(3'-phospho-DNA)-tyrosine intermediate.

It belongs to the 'phage' integrase family. XerC subfamily. As to quaternary structure, forms a cyclic heterotetrameric complex composed of two molecules of XerC and two molecules of XerD.

Its subcellular location is the cytoplasm. Functionally, site-specific tyrosine recombinase, which acts by catalyzing the cutting and rejoining of the recombining DNA molecules. The XerC-XerD complex is essential to convert dimers of the bacterial chromosome into monomers to permit their segregation at cell division. It also contributes to the segregational stability of plasmids. This is Tyrosine recombinase XerC from Pseudomonas fluorescens (strain ATCC BAA-477 / NRRL B-23932 / Pf-5).